Reading from the N-terminus, the 1116-residue chain is DNA-directed RNA polymerase subunit beta (1116 aa).

Over residues 1070 to 1100 (KIREEEKEREKEREAREMEDPEKIVSKIDAK) the composition is skewed to basic and acidic residues. Residues 1070–1116 (KIREEEKEREKEREAREMEDPEKIVSKIDAKQKKKYKKTKKQTEKKK) form a disordered region. Residues 1101–1116 (QKKKYKKTKKQTEKKK) are compositionally biased toward basic residues.

It belongs to the RNA polymerase beta chain family. In plastids the minimal PEP RNA polymerase catalytic core is composed of four subunits: alpha, beta, beta', and beta''. When a (nuclear-encoded) sigma factor is associated with the core the holoenzyme is formed, which can initiate transcription.

The protein resides in the plastid. It localises to the chloroplast. The enzyme catalyses RNA(n) + a ribonucleoside 5'-triphosphate = RNA(n+1) + diphosphate. Its function is as follows. DNA-dependent RNA polymerase catalyzes the transcription of DNA into RNA using the four ribonucleoside triphosphates as substrates. The chain is DNA-directed RNA polymerase subunit beta from Heterosigma akashiwo (Chromophytic alga).